Here is a 226-residue protein sequence, read N- to C-terminus: Ribonuclease 3 (226 aa).

Residues 6–128 enclose the RNase III domain; the sequence is TNRLQKKLGY…LIGGVFLDSD (123 aa). Glutamate 41 provides a ligand contact to Mg(2+). Aspartate 45 is an active-site residue. The Mg(2+) site is built by aspartate 114 and glutamate 117. Glutamate 117 is a catalytic residue. The DRBM domain occupies 155–225; it reads DPKTRLQEYL…AEQALKLLEL (71 aa).

The protein belongs to the ribonuclease III family. In terms of assembly, homodimer. Mg(2+) is required as a cofactor.

The protein resides in the cytoplasm. It catalyses the reaction Endonucleolytic cleavage to 5'-phosphomonoester.. Digests double-stranded RNA. Involved in the processing of primary rRNA transcript to yield the immediate precursors to the large and small rRNAs (23S and 16S). Processes some mRNAs, and tRNAs when they are encoded in the rRNA operon. Processes pre-crRNA and tracrRNA of type II CRISPR loci if present in the organism. The chain is Ribonuclease 3 from Sodalis glossinidius (strain morsitans).